Here is a 247-residue protein sequence, read N- to C-terminus: Fasciclin-like arabinogalactan protein 13 (247 aa).

A signal peptide spans 1-25 (MATTPLLLLLLTAVFLSTEITAQRA). The FAS1 domain occupies 34–179 (PINITAILEK…LAVYVVDMVL (146 aa)). N-linked (GlcNAc...) asparagine glycosylation is found at Asn-36, Asn-55, Asn-68, Asn-141, and Asn-150. The segment at 189–228 (KISPMAPPPKSKSPDVSDDSESSKKAAAPSESEKSGSGEM) is disordered. Gly-224 carries the GPI-anchor amidated glycine lipid modification. Residues 225–247 (SGEMNTGLGLGLGLVVLCLKFLL) constitute a propeptide, removed in mature form.

It belongs to the fasciclin-like AGP family.

It localises to the cell membrane. Its function is as follows. May be a cell surface adhesion protein. In Arabidopsis thaliana (Mouse-ear cress), this protein is Fasciclin-like arabinogalactan protein 13 (FLA13).